We begin with the raw amino-acid sequence, 1481 residues long: Cystic fibrosis transmembrane conductance regulator (1481 aa).

Over 1–77 (MQRSPLEKAS…KLINALRRCF (77 aa)) the chain is Cytoplasmic. Residues 78–98 (FWRFMFYGIILYLGEVTKAVQ) traverse the membrane as a helical segment. Residues 81–365 (FMFYGIILYL…WAVQTWYDSL (285 aa)) form the ABC transmembrane type-1 1 domain. Residues 99 to 122 (PLLLGRIIASYDPDNEAERSIAIY) lie on the Extracellular side of the membrane. A helical transmembrane segment spans residues 123 to 146 (LGIGLCLLFIVRTLLLHPAIFGLH). Topologically, residues 147–195 (HIGMQMRIAMFSLIYKKTLKLSSRVLDKISIGQLVSLLSNNLNKFDEGL) are cytoplasmic. The helical transmembrane segment at 196 to 216 (ALAHFVWIAPLQVTLLMGLLW) threads the bilayer. Residues 217–222 (DLLQAS) lie on the Extracellular side of the membrane. The chain crosses the membrane as a helical span at residues 223–243 (AFCGLAFLIVLALFQAGLGRM). The Cytoplasmic segment spans residues 244-298 (MMKYRDQRAGKINERLVITSEMIENIQSVKAYCWEEAMEKMIENLRQTELKLTRK). Residues 299 to 319 (AAYVRYFNSSAFFFSGFFVVF) form a helical membrane-spanning segment. At 320–339 (LSVLPYALIKGIVLRRIFTT) the chain is on the extracellular side. Residues 340–358 (ISFCIVLRMAVTRQFPWAV) traverse the membrane as a helical segment. Topologically, residues 359–858 (QTWYDSLGAI…YLRYITIHKS (500 aa)) are cytoplasmic. Residues tryptophan 401, serine 433, 457-464 (GSTGAGKT), and glutamine 492 contribute to the ATP site. Residues 422 to 645 (NGDNSLFFSN…RPDFSSKLMG (224 aa)) enclose the ABC transporter 1 domain. A lipid anchor (S-palmitoyl cysteine) is attached at cysteine 523. Residues serine 548 and serine 659 each carry the phosphoserine modification. Positions 653 to 831 (SAERRNSILT…EEINEDDLKE (179 aa)) are disordered R region. Phosphoserine; by PKA is present on serine 669. Phosphoserine is present on serine 685. Lysine 687 participates in a covalent cross-link: Glycyl lysine isopeptide (Lys-Gly) (interchain with G-Cter in ubiquitin). Residues serine 699 and serine 711 each carry the phosphoserine modification. Threonine 716 is modified (phosphothreonine). Phosphoserine occurs at positions 736, 767, 790, 795, and 813. The helical transmembrane segment at 859-879 (LIFVLIWCLVIFLAEVAASLV) threads the bilayer. An ABC transmembrane type-1 2 domain is found at 859–1155 (LIFVLIWCLV…AVNSSIDVDS (297 aa)). Residues 880 to 918 (VLWLLKETPPQDSGNSTKGANNSYAVIITSTSSYYVFYI) lie on the Extracellular side of the membrane. N-linked (GlcNAc...) asparagine glycosylation is found at asparagine 894 and asparagine 900. Residues 919–939 (YVGVADTLLALGLFRGLPLVH) traverse the membrane as a discontinuously helical segment. The Cytoplasmic portion of the chain corresponds to 940–990 (TLITVSKILHHKMLHSVLQAPMSTLNTLKAGGILNRFSKDMAILDDLLPLT). The helical transmembrane segment at 991–1011 (IFDFIQLLLIVIGAVAVVSVL) threads the bilayer. Topologically, residues 1012–1013 (QP) are extracellular. The chain crosses the membrane as a helical span at residues 1014-1034 (YIFLATVPVIAAFIILRAYFL). At 1035–1095 (HTSQQLKQLE…TANWFLYLST (61 aa)) the chain is on the cytoplasmic side. Residues 1096 to 1116 (LRWFQMRIEMIFVIFFIAVTF) traverse the membrane as a helical segment. Residues 1117–1130 (ISILTTGEGEGTVG) are Extracellular-facing. The chain crosses the membrane as a helical span at residues 1131–1151 (IILTLAMNIMSTLQWAVNSSI). Over 1152–1481 (DVDSLMRSVS…TEEEVQETRL (330 aa)) the chain is Cytoplasmic. The region spanning 1211–1444 (MTVKDLTAKY…KSLFQQAISS (234 aa)) is the ABC transporter 2 domain. ATP is bound by residues tyrosine 1220 and 1245 to 1252 (GRTGSGKS). The interaction with GORASP2 stretch occupies residues 1387–1481 (RTLKQAFADC…TEEEVQETRL (95 aa)). Cysteine 1396 carries S-palmitoyl cysteine lipidation. 2 positions are modified to phosphoserine: serine 1445 and serine 1457. The disordered stretch occupies residues 1449–1481 (KLFPHRNSSKHKSRSKIAALQEETEEEVQETRL). The span at 1451 to 1463 (FPHRNSSKHKSRS) shows a compositional bias: basic residues. The span at 1470–1481 (EETEEEVQETRL) shows a compositional bias: acidic residues. Residues 1479–1481 (TRL) carry the PDZ-binding motif.

The protein belongs to the ABC transporter superfamily. ABCC family. CFTR transporter (TC 3.A.1.202) subfamily. In terms of assembly, monomer; does not require oligomerization for channel activity. May form oligomers in the membrane. Interacts with SLC26A3, SLC26A6 and NHERF1. Interacts with SHANK2. Interacts with MYO6. Interacts (via C-terminus) with GOPC (via PDZ domain); this promotes CFTR internalization and thereby decreases channel activity. Interacts with SLC4A7 through NHERF1. Found in a complex with MYO5B and RAB11A. Interacts with ANO1. Interacts with SLC26A8. Interacts with AHCYL1; the interaction increases CFTR activity. Interacts with CSE1L. The core-glycosylated form interacts with GORASP2 (via PDZ GRASP-type 1 domain) in respone to ER stress. Interacts with MARCHF2; the interaction leads to CFTR ubiqtuitination and degradation. Interacts with ADGRG2. In terms of processing, N-glycosylated. Post-translationally, phosphorylated; cAMP treatment promotes phosphorylation and activates the channel. Dephosphorylation decreases the ATPase activity (in vitro). Phosphorylation at PKA sites activates the channel. Phosphorylation at PKC sites enhances the response to phosphorylation by PKA. Phosphorylated by AMPK; this inhibits channel activity. Ubiquitinated, leading to its degradation in the lysosome. Deubiquitination by USP10 in early endosomes enhances its endocytic recycling to the cell membrane. Ubiquitinated by RNF185 during ER stress. Ubiquitinated by MARCHF2.

It is found in the apical cell membrane. The protein localises to the early endosome membrane. It localises to the cell membrane. The protein resides in the recycling endosome membrane. Its subcellular location is the endoplasmic reticulum membrane. It is found in the nucleus. It catalyses the reaction ATP + H2O + closed Cl(-) channel = ADP + phosphate + open Cl(-) channel.. It carries out the reaction chloride(in) = chloride(out). The enzyme catalyses hydrogencarbonate(in) = hydrogencarbonate(out). The catalysed reaction is ATP + H2O = ADP + phosphate + H(+). In terms of biological role, epithelial ion channel that plays an important role in the regulation of epithelial ion and water transport and fluid homeostasis. Mediates the transport of chloride ions across the cell membrane. Possesses an intrinsic ATPase activity and utilizes ATP to gate its channel; the passive flow of anions through the channel is gated by cycles of ATP binding and hydrolysis by the ATP-binding domains. The ion channel is also permeable to HCO(3)(-); selectivity depends on the extracellular chloride concentration. Exerts its function also by modulating the activity of other ion channels and transporters. Contributes to the regulation of the pH and the ion content of the epithelial fluid layer. Modulates the activity of the epithelial sodium channel (ENaC) complex, in part by regulating the cell surface expression of the ENaC complex. May regulate bicarbonate secretion and salvage in epithelial cells by regulating the transporter SLC4A7. Can inhibit the chloride channel activity of ANO1. Plays a role in the chloride and bicarbonate homeostasis during sperm epididymal maturation and capacitation. The protein is Cystic fibrosis transmembrane conductance regulator of Equus caballus (Horse).